We begin with the raw amino-acid sequence, 1527 residues long: DNA-directed RNA polymerase subunit beta'' (1527 aa).

Zn(2+) is bound by residues Cys220, Cys296, Cys303, and Cys306. Basic and acidic residues-rich tracts occupy residues 644 to 661 and 671 to 681; these read RTQE…RTRE and PENKYRTREGE. Disordered stretches follow at residues 644-681 and 712-793; these read RTQE…REGE and YRTL…KKEG. Acidic residues-rich tracts occupy residues 737–755 and 763–786; these read GEYE…SSED and TLEE…PEED.

This sequence belongs to the RNA polymerase beta' chain family. RpoC2 subfamily. As to quaternary structure, in plastids the minimal PEP RNA polymerase catalytic core is composed of four subunits: alpha, beta, beta', and beta''. When a (nuclear-encoded) sigma factor is associated with the core the holoenzyme is formed, which can initiate transcription. Zn(2+) serves as cofactor.

The protein localises to the plastid. It localises to the chloroplast. It carries out the reaction RNA(n) + a ribonucleoside 5'-triphosphate = RNA(n+1) + diphosphate. In terms of biological role, DNA-dependent RNA polymerase catalyzes the transcription of DNA into RNA using the four ribonucleoside triphosphates as substrates. This chain is DNA-directed RNA polymerase subunit beta'', found in Zea mays (Maize).